The primary structure comprises 156 residues: Cytochrome c-type biogenesis protein CcmE (156 aa).

Topologically, residues 1-8 are cytoplasmic; the sequence is MNPLRRKR. A helical; Signal-anchor for type II membrane protein transmembrane segment spans residues 9–29; the sequence is LLIILAILAGVGIAVGLAMSA. The Periplasmic segment spans residues 30–156; that stretch reads LRENINLFYT…RIRSLPRRAK (127 aa). Heme-binding residues include His124 and Tyr128.

Belongs to the CcmE/CycJ family.

It is found in the cell inner membrane. Its function is as follows. Heme chaperone required for the biogenesis of c-type cytochromes. Transiently binds heme delivered by CcmC and transfers the heme to apo-cytochromes in a process facilitated by CcmF and CcmH. The protein is Cytochrome c-type biogenesis protein CcmE of Pseudomonas fluorescens.